The primary structure comprises 156 residues: Probable cyclic pyranopterin monophosphate synthase (156 aa).

Substrate-binding positions include 74 to 76 (LCH) and 110 to 111 (ME). Aspartate 125 is an active-site residue.

This sequence belongs to the MoaC family. As to quaternary structure, homohexamer; trimer of dimers.

The catalysed reaction is (8S)-3',8-cyclo-7,8-dihydroguanosine 5'-triphosphate = cyclic pyranopterin phosphate + diphosphate. The protein operates within cofactor biosynthesis; molybdopterin biosynthesis. Catalyzes the conversion of (8S)-3',8-cyclo-7,8-dihydroguanosine 5'-triphosphate to cyclic pyranopterin monophosphate (cPMP). The chain is Probable cyclic pyranopterin monophosphate synthase from Thermococcus onnurineus (strain NA1).